The chain runs to 176 residues: Ribosome maturation factor RimM (176 aa).

The region spanning 97-176 (EDEFYWRDLI…QITVDWDPDF (80 aa)) is the PRC barrel domain.

This sequence belongs to the RimM family. Binds ribosomal protein uS19.

Its subcellular location is the cytoplasm. Its function is as follows. An accessory protein needed during the final step in the assembly of 30S ribosomal subunit, possibly for assembly of the head region. Essential for efficient processing of 16S rRNA. May be needed both before and after RbfA during the maturation of 16S rRNA. It has affinity for free ribosomal 30S subunits but not for 70S ribosomes. This Shewanella sediminis (strain HAW-EB3) protein is Ribosome maturation factor RimM.